The chain runs to 372 residues: 3-dehydroquinate synthase (372 aa).

Residues 113–117 (GVIGD), 137–138 (TS), Lys150, Lys159, and 177–180 (TLKT) each bind NAD(+). 3 residues coordinate Zn(2+): Glu192, His257, and His274.

The protein belongs to the sugar phosphate cyclases superfamily. Dehydroquinate synthase family. The cofactor is Co(2+). Zn(2+) is required as a cofactor. NAD(+) serves as cofactor.

The protein resides in the cytoplasm. The catalysed reaction is 7-phospho-2-dehydro-3-deoxy-D-arabino-heptonate = 3-dehydroquinate + phosphate. The protein operates within metabolic intermediate biosynthesis; chorismate biosynthesis; chorismate from D-erythrose 4-phosphate and phosphoenolpyruvate: step 2/7. Catalyzes the conversion of 3-deoxy-D-arabino-heptulosonate 7-phosphate (DAHP) to dehydroquinate (DHQ). This is 3-dehydroquinate synthase from Acaryochloris marina (strain MBIC 11017).